Here is a 296-residue protein sequence, read N- to C-terminus: GTPase Era (296 aa).

The 168-residue stretch at 7–174 (RAGFVAIVGR…LDEIAAGLPQ (168 aa)) folds into the Era-type G domain. Positions 15-22 (GRPNVGKS) are G1. GTP is bound at residue 15-22 (GRPNVGKS). Residues 41 to 45 (QTTRH) are G2. Residues 62–65 (DTPG) form a G3 region. GTP-binding positions include 62-66 (DTPGF) and 123-126 (SKID). The G4 stretch occupies residues 123 to 126 (SKID). The G5 stretch occupies residues 153–155 (VSA). Positions 205–281 (VGDELPYGCT…HLEIYIKVRK (77 aa)) constitute a KH type-2 domain.

This sequence belongs to the TRAFAC class TrmE-Era-EngA-EngB-Septin-like GTPase superfamily. Era GTPase family. Monomer.

It localises to the cytoplasm. The protein localises to the cell inner membrane. An essential GTPase that binds both GDP and GTP, with rapid nucleotide exchange. Plays a role in 16S rRNA processing and 30S ribosomal subunit biogenesis and possibly also in cell cycle regulation and energy metabolism. This Bordetella parapertussis (strain 12822 / ATCC BAA-587 / NCTC 13253) protein is GTPase Era.